Consider the following 440-residue polypeptide: Putative postmeiotic segregation increased 2-like protein 1 (440 aa).

Residues 164-178 are compositionally biased toward basic and acidic residues; it reads RVEHNVESSRWEPRR. A disordered region spans residues 164-215; sequence RVEHNVESSRWEPRRRGACGSRGGNFPSPRGGSGVASLERAESSSTEPAKAI. The Histidine kinase domain maps to 230 to 364; sequence PVVPSLSTAV…MTVSVKQLFS (135 aa).

The protein belongs to the DNA mismatch repair MutL/HexB family. In terms of tissue distribution, highly expressed in kidney, spleen, adrenal gland, ovary and cerebellum and to a lower extent in liver, esophagus, stomach, duodenum, colon, bladder, uterus, lung, pancreas and cerebrum. Not expressed in heart.

This is Putative postmeiotic segregation increased 2-like protein 1 (PMS2P1) from Homo sapiens (Human).